A 207-amino-acid chain; its full sequence is Guanylate kinase (207 aa).

A Guanylate kinase-like domain is found at 4–184; it reads GTLYIVSAPS…ALMDFKAILR (181 aa). 11-18 lines the ATP pocket; the sequence is APSGAGKS.

Belongs to the guanylate kinase family.

The protein localises to the cytoplasm. It carries out the reaction GMP + ATP = GDP + ADP. Its function is as follows. Essential for recycling GMP and indirectly, cGMP. The chain is Guanylate kinase from Vibrio parahaemolyticus serotype O3:K6 (strain RIMD 2210633).